The chain runs to 182 residues: NADH-quinone oxidoreductase subunit I (182 aa).

4Fe-4S ferredoxin-type domains follow at residues 52–82 (LTRDPDGEERCVACNLCAVACPVGCISLQKA) and 92–121 (EFFRINFSRCIFCGLCEEACPTTAIQLTPD). [4Fe-4S] cluster-binding residues include C62, C65, C68, C72, C101, C104, C107, and C111.

This sequence belongs to the complex I 23 kDa subunit family. In terms of assembly, NDH-1 is composed of 13 different subunits. Subunits NuoA, H, J, K, L, M, N constitute the membrane sector of the complex. Requires [4Fe-4S] cluster as cofactor.

It localises to the cell inner membrane. The enzyme catalyses a quinone + NADH + 5 H(+)(in) = a quinol + NAD(+) + 4 H(+)(out). NDH-1 shuttles electrons from NADH, via FMN and iron-sulfur (Fe-S) centers, to quinones in the respiratory chain. The immediate electron acceptor for the enzyme in this species is believed to be ubiquinone. Couples the redox reaction to proton translocation (for every two electrons transferred, four hydrogen ions are translocated across the cytoplasmic membrane), and thus conserves the redox energy in a proton gradient. The chain is NADH-quinone oxidoreductase subunit I from Pseudomonas entomophila (strain L48).